Consider the following 957-residue polypeptide: Glycine dehydrogenase (decarboxylating) (957 aa).

An N6-(pyridoxal phosphate)lysine modification is found at lysine 708.

The protein belongs to the GcvP family. In terms of assembly, the glycine cleavage system is composed of four proteins: P, T, L and H. It depends on pyridoxal 5'-phosphate as a cofactor.

The catalysed reaction is N(6)-[(R)-lipoyl]-L-lysyl-[glycine-cleavage complex H protein] + glycine + H(+) = N(6)-[(R)-S(8)-aminomethyldihydrolipoyl]-L-lysyl-[glycine-cleavage complex H protein] + CO2. Functionally, the glycine cleavage system catalyzes the degradation of glycine. The P protein binds the alpha-amino group of glycine through its pyridoxal phosphate cofactor; CO(2) is released and the remaining methylamine moiety is then transferred to the lipoamide cofactor of the H protein. This chain is Glycine dehydrogenase (decarboxylating), found in Salmonella agona (strain SL483).